The primary structure comprises 226 residues: Cytidylate kinase (226 aa).

ATP is bound at residue 12 to 20 (GPSGAGKGT).

Belongs to the cytidylate kinase family. Type 1 subfamily.

The protein resides in the cytoplasm. It catalyses the reaction CMP + ATP = CDP + ADP. It carries out the reaction dCMP + ATP = dCDP + ADP. In Vibrio parahaemolyticus serotype O3:K6 (strain RIMD 2210633), this protein is Cytidylate kinase.